A 188-amino-acid chain; its full sequence is GTP cyclohydrolase 1 (188 aa).

The Zn(2+) site is built by cysteine 78, histidine 81, and cysteine 150.

This sequence belongs to the GTP cyclohydrolase I family. In terms of assembly, toroid-shaped homodecamer, composed of two pentamers of five dimers.

The enzyme catalyses GTP + H2O = 7,8-dihydroneopterin 3'-triphosphate + formate + H(+). It functions in the pathway cofactor biosynthesis; 7,8-dihydroneopterin triphosphate biosynthesis; 7,8-dihydroneopterin triphosphate from GTP: step 1/1. The polypeptide is GTP cyclohydrolase 1 (Geobacillus kaustophilus (strain HTA426)).